Reading from the N-terminus, the 534-residue chain is Steroid hormone receptor family member cnr14 (534 aa).

2 disordered regions span residues 30-53 (SGKT…QWSH) and 119-139 (PATS…GHTT). The segment covering 119–130 (PATSVTSSLSPP) has biased composition (low complexity). A DNA-binding region (nuclear receptor) is located at residues 148–223 (ISFCKVCGDK…SGMSKDSVRQ (76 aa)). NR C4-type zinc fingers lie at residues 151-171 (CKVC…CEGC) and 187-211 (CLKQ…FKKC). The NR LBD domain occupies 252–493 (EVDAVYEAVL…PPLVVEMFQL (242 aa)). The disordered stretch occupies residues 502-534 (HNNQENQYTPAPEHQSPQPQQPTPNQQQTPVHC). Positions 511 to 534 (PAPEHQSPQPQQPTPNQQQTPVHC) are enriched in low complexity.

Belongs to the nuclear hormone receptor family. NR1 subfamily. Most abundant in embryos.

Its subcellular location is the nucleus. Its function is as follows. Transcriptional regulator which is involved in the sex determination and X chromosome dosage compensation pathways. Directly binds to five 5'-A(G/C)(G/T)(T/G)C(A/G)-3' sites in the promoter of sex-determining factor xol-1 to negatively regulate its expression and promote hermaphrodite development. Together with fox-1 is involved in making the distinction between one and two X-chromosomes. Plays a role in the fox-1-mediated repression of the functionally active isoform (isoform b) of the sex-determining factor xol-1 gene to promote hermaphrodite development. Plays a role in the association of the dosage compensation complex proteins dpy-27 and sdc-3 with the hermaphrodite X chromosomes. The sequence is that of Steroid hormone receptor family member cnr14 from Caenorhabditis elegans.